A 77-amino-acid chain; its full sequence is DNA-directed RNA polymerase subunit epsilon (77 aa).

The protein belongs to the RNA polymerase subunit epsilon family. As to quaternary structure, RNAP is composed of a core of 2 alpha, a beta and a beta' subunit. The core is associated with a delta subunit, and at least one of epsilon or omega. When a sigma factor is associated with the core the holoenzyme is formed, which can initiate transcription.

The enzyme catalyses RNA(n) + a ribonucleoside 5'-triphosphate = RNA(n+1) + diphosphate. Functionally, a non-essential component of RNA polymerase (RNAP). The protein is DNA-directed RNA polymerase subunit epsilon of Streptococcus pneumoniae serotype 19F (strain G54).